The chain runs to 397 residues: 4-hydroxybenzoate polyprenyltransferase, mitochondrial (397 aa).

Residues 1-14 (MFAVRHLLKSRKHF) constitute a mitochondrion transit peptide. Helical transmembrane passes span 96 to 116 (IGTYLLFWPCAWSIALSADAG), 121 to 141 (LTMLGLFGTGALIMRGAGCTI), 169 to 189 (FDAIVFLSAQLSLGLLVLVQL), 190 to 210 (NWQSILLGASSLGLVITYPLM), 213 to 233 (VTYWPQLVLGMAFNWGALLGW), 242 to 262 (LAACLPLYLSGVCWTIVYDTI), 289 to 309 (VWLSGFTAAMLTGLSTAGWAC), 313 to 333 (LPYYAAVGVVGAHLVQQIYSL), and 345 to 365 (FLSNHQVGLILFLGIVLGTLL).

It belongs to the UbiA prenyltransferase family. Mg(2+) serves as cofactor.

It is found in the mitochondrion inner membrane. The enzyme catalyses an all-trans-polyprenyl diphosphate + 4-hydroxybenzoate = a 4-hydroxy-3-(all-trans-polyprenyl)benzoate + diphosphate. The protein operates within cofactor biosynthesis; ubiquinone biosynthesis. Functionally, catalyzes the prenylation of para-hydroxybenzoate (PHB) with an all-trans polyprenyl group. Mediates the second step in the final reaction sequence of coenzyme Q (CoQ) biosynthesis, which is the condensation of the polyisoprenoid side chain with PHB, generating the first membrane-bound Q intermediate. This is 4-hydroxybenzoate polyprenyltransferase, mitochondrial from Drosophila pseudoobscura pseudoobscura (Fruit fly).